We begin with the raw amino-acid sequence, 82 residues long: Small ribosomal subunit protein bS16 (82 aa).

Belongs to the bacterial ribosomal protein bS16 family.

The sequence is that of Small ribosomal subunit protein bS16 from Natranaerobius thermophilus (strain ATCC BAA-1301 / DSM 18059 / JW/NM-WN-LF).